The following is a 541-amino-acid chain: Eukaryotic translation initiation factor 3 subunit L (541 aa).

The region spanning 308–516 (TFSDILLYIQ…IHIADTKVSH (209 aa)) is the PCI domain.

Belongs to the eIF-3 subunit L family. Component of the eukaryotic translation initiation factor 3 (eIF-3) complex. The eIF-3 complex interacts with pix.

Its subcellular location is the cytoplasm. Its function is as follows. Component of the eukaryotic translation initiation factor 3 (eIF-3) complex, which is involved in protein synthesis of a specialized repertoire of mRNAs and, together with other initiation factors, stimulates binding of mRNA and methionyl-tRNAi to the 40S ribosome. The eIF-3 complex specifically targets and initiates translation of a subset of mRNAs involved in cell proliferation. The sequence is that of Eukaryotic translation initiation factor 3 subunit L from Drosophila pseudoobscura pseudoobscura (Fruit fly).